The chain runs to 601 residues: Elongation factor 4 (601 aa).

A tr-type G domain is found at 7–189 (SHIRNFSIIA…SIVQLVPPPQ (183 aa)). Residues 19–24 (DHGKST) and 136–139 (NKID) contribute to the GTP site.

The protein belongs to the TRAFAC class translation factor GTPase superfamily. Classic translation factor GTPase family. LepA subfamily.

The protein localises to the cell inner membrane. The enzyme catalyses GTP + H2O = GDP + phosphate + H(+). Required for accurate and efficient protein synthesis under certain stress conditions. May act as a fidelity factor of the translation reaction, by catalyzing a one-codon backward translocation of tRNAs on improperly translocated ribosomes. Back-translocation proceeds from a post-translocation (POST) complex to a pre-translocation (PRE) complex, thus giving elongation factor G a second chance to translocate the tRNAs correctly. Binds to ribosomes in a GTP-dependent manner. This is Elongation factor 4 from Trichodesmium erythraeum (strain IMS101).